The chain runs to 1201 residues: Vitamin B12-dependent ribonucleotide reductase (1201 aa).

Substrate contacts are provided by residues S153, 198 to 199 (AC), G230, 482 to 486 (NPCSE), and 683 to 687 (PTGTI). C199 and C495 are oxidised to a cystine. N482 (proton acceptor) is an active-site residue. C484 acts as the Cysteine radical intermediate in catalysis. E486 acts as the Proton acceptor in catalysis. Residues 1100–1118 (DEIGSKRATAESNGQEKET) are compositionally biased toward basic and acidic residues. The interval 1100-1120 (DEIGSKRATAESNGQEKETLS) is disordered.

This sequence belongs to the ribonucleoside diphosphate reductase class-2 family. The cofactor is adenosylcob(III)alamin.

It carries out the reaction a 2'-deoxyribonucleoside 5'-diphosphate + [thioredoxin]-disulfide + H2O = a ribonucleoside 5'-diphosphate + [thioredoxin]-dithiol. Catalyzes the reduction of ribonucleotides to deoxyribonucleotides. May function to provide a pool of deoxyribonucleotide precursors for DNA repair during oxygen limitation and/or for immediate growth after restoration of oxygen. This chain is Vitamin B12-dependent ribonucleotide reductase (nrdJ), found in Leptospira interrogans serogroup Icterohaemorrhagiae serovar Lai (strain 56601).